The primary structure comprises 261 residues: MSETRESNESTVSSLQTKLLLNDGISENNKKNVILLNQIVPFILNTSHYMTDLMYVLYYLAQKQEDEVLNHSGTFISHKKELLALKSDICELIYDLRTGFRLLLDSCELDHFETPGKCRHLIEKVLVTSIYGVNRYIFQELNRLNVDFKDEFILQMQNCLSGFVNLYKFLNKIPMSKQQSQMNDLQMKILVNVLQNELLPIWKFQLDLLNCKLFNELSKDKGLINIYRKATNDSVIDVSKGEPFIRYVNWLKDQIIGEMTV.

This is an uncharacterized protein from Saccharomyces cerevisiae (strain ATCC 204508 / S288c) (Baker's yeast).